A 545-amino-acid chain; its full sequence is CTP synthase (545 aa).

The amidoligase domain stretch occupies residues 1 to 266; it reads MTTNYIFVTG…DDYICKRFSL (266 aa). Serine 14 contacts CTP. Serine 14 serves as a coordination point for UTP. Residues 15-20 and aspartate 72 contribute to the ATP site; that span reads SLGKGI. Mg(2+) contacts are provided by aspartate 72 and glutamate 140. CTP-binding positions include 147-149, 187-192, and lysine 223; these read DIE and KTKPTQ. UTP is bound by residues 187–192 and lysine 223; that span reads KTKPTQ. 239-241 contributes to the ATP binding site; the sequence is KDV. Residues 291–542 form the Glutamine amidotransferase type-1 domain; it reads NIGMVGKYVE…VKAASEYQKR (252 aa). Residue glycine 352 participates in L-glutamine binding. Cysteine 379 serves as the catalytic Nucleophile; for glutamine hydrolysis. Residues 380-383, glutamate 403, and arginine 470 contribute to the L-glutamine site; that span reads LGMQ. Catalysis depends on residues histidine 515 and glutamate 517.

This sequence belongs to the CTP synthase family. In terms of assembly, homotetramer.

The catalysed reaction is UTP + L-glutamine + ATP + H2O = CTP + L-glutamate + ADP + phosphate + 2 H(+). It catalyses the reaction L-glutamine + H2O = L-glutamate + NH4(+). It carries out the reaction UTP + NH4(+) + ATP = CTP + ADP + phosphate + 2 H(+). It participates in pyrimidine metabolism; CTP biosynthesis via de novo pathway; CTP from UDP: step 2/2. Its activity is regulated as follows. Allosterically activated by GTP, when glutamine is the substrate; GTP has no effect on the reaction when ammonia is the substrate. The allosteric effector GTP functions by stabilizing the protein conformation that binds the tetrahedral intermediate(s) formed during glutamine hydrolysis. Inhibited by the product CTP, via allosteric rather than competitive inhibition. In terms of biological role, catalyzes the ATP-dependent amination of UTP to CTP with either L-glutamine or ammonia as the source of nitrogen. Regulates intracellular CTP levels through interactions with the four ribonucleotide triphosphates. The protein is CTP synthase of Erwinia tasmaniensis (strain DSM 17950 / CFBP 7177 / CIP 109463 / NCPPB 4357 / Et1/99).